Reading from the N-terminus, the 85-residue chain is Small ribosomal subunit protein eS21 (85 aa).

It belongs to the eukaryotic ribosomal protein eS21 family. Component of the 40S small ribosomal subunit.

The protein localises to the cytoplasm. The protein resides in the cytosol. Its subcellular location is the rough endoplasmic reticulum. This Pectinaria gouldii (Trumpet worm) protein is Small ribosomal subunit protein eS21 (rps-21).